A 432-amino-acid polypeptide reads, in one-letter code: Enolase (432 aa).

Glutamine 167 provides a ligand contact to (2R)-2-phosphoglycerate. Glutamate 209 functions as the Proton donor in the catalytic mechanism. Mg(2+) contacts are provided by aspartate 246, glutamate 289, and aspartate 316. Positions 341, 370, 371, and 392 each coordinate (2R)-2-phosphoglycerate. Lysine 341 serves as the catalytic Proton acceptor.

The protein belongs to the enolase family. The cofactor is Mg(2+).

Its subcellular location is the cytoplasm. It localises to the secreted. It is found in the cell surface. The catalysed reaction is (2R)-2-phosphoglycerate = phosphoenolpyruvate + H2O. The protein operates within carbohydrate degradation; glycolysis; pyruvate from D-glyceraldehyde 3-phosphate: step 4/5. Its function is as follows. Catalyzes the reversible conversion of 2-phosphoglycerate (2-PG) into phosphoenolpyruvate (PEP). It is essential for the degradation of carbohydrates via glycolysis. In Thermotoga neapolitana (strain ATCC 49049 / DSM 4359 / NBRC 107923 / NS-E), this protein is Enolase.